The chain runs to 120 residues: Large ribosomal subunit protein uL18 (120 aa).

It belongs to the universal ribosomal protein uL18 family. As to quaternary structure, part of the 50S ribosomal subunit; part of the 5S rRNA/L5/L18/L25 subcomplex. Contacts the 5S and 23S rRNAs.

In terms of biological role, this is one of the proteins that bind and probably mediate the attachment of the 5S RNA into the large ribosomal subunit, where it forms part of the central protuberance. The protein is Large ribosomal subunit protein uL18 of Lawsonia intracellularis (strain PHE/MN1-00).